The chain runs to 176 residues: Cytochrome b (176 aa).

Transmembrane regions (helical) follow at residues 33–53 (FGSL…FLAM), 77–98 (WLLR…YLHV), and 113–133 (WNVG…GYVL). Histidine 83 and histidine 97 together coordinate heme b.

It belongs to the cytochrome b family. As to quaternary structure, the cytochrome bc1 complex contains 11 subunits: 3 respiratory subunits (MT-CYB, CYC1 and UQCRFS1), 2 core proteins (UQCRC1 and UQCRC2) and 6 low-molecular weight proteins (UQCRH/QCR6, UQCRB/QCR7, UQCRQ/QCR8, UQCR10/QCR9, UQCR11/QCR10 and a cleavage product of UQCRFS1). This cytochrome bc1 complex then forms a dimer. It depends on heme b as a cofactor.

The protein resides in the mitochondrion inner membrane. Functionally, component of the ubiquinol-cytochrome c reductase complex (complex III or cytochrome b-c1 complex) that is part of the mitochondrial respiratory chain. The b-c1 complex mediates electron transfer from ubiquinol to cytochrome c. Contributes to the generation of a proton gradient across the mitochondrial membrane that is then used for ATP synthesis. This is Cytochrome b (MT-CYB) from Tadarida brasiliensis (Brazilian free-tailed bat).